The sequence spans 465 residues: Serine carboxypeptidase-like 19 (465 aa).

A signal peptide spans 1–23 (MRNLSFIVLFLLTLFFIHHLVDA). 77 to 79 (TGG) contacts substrate. 3 disulfides stabilise this stretch: Cys-82–Cys-353, Cys-246–Cys-260, and Cys-284–Cys-320. Asn-103 carries N-linked (GlcNAc...) asparagine glycosylation. 177 to 179 (DSY) serves as a coordination point for substrate. The active site involves Ser-178. The propeptide at 292–317 (DTPNIRTDRRRVMKEFSVNDSSSLPP) is linker peptide. 2 N-linked (GlcNAc...) asparagine glycosylation sites follow: Asn-310 and Asn-373. Asp-389 is a catalytic residue. A glycan (N-linked (GlcNAc...) asparagine) is linked at Asn-405. 439 to 443 (KGGGH) contacts substrate. The active site involves His-443.

It belongs to the peptidase S10 family. As to quaternary structure, heterodimer. In terms of processing, N-glycosylated. As to expression, expressed in roots and flowers, and at lower levels in young leaves and seedlings. Expressed in mature seeds and detected in expanding siliques.

Its subcellular location is the secreted. The catalysed reaction is 1-O-(trans-sinapoyl)-beta-D-glucose + choline = O-sinapoylcholine + D-glucose. With respect to regulation, slightly inhibited by phenylmethylsulfonyl fluoride (PMSF). Functionally, involved in plants secondary metabolism. Functions as acyltransferase to form the sinapate ester sinapoylcholine also known as sinapine. Able to convert in vitro benzoylglucose into benzoylcholine. This chain is Serine carboxypeptidase-like 19, found in Arabidopsis thaliana (Mouse-ear cress).